A 232-amino-acid chain; its full sequence is Putative dimethylsulfoniopropionate lyase DddL (232 aa).

The a divalent metal cation site is built by H154, E159, Y161, and H190.

This sequence belongs to the non-heme iron-dependent dioxygenase family. In terms of assembly, homodimer. A divalent metal cation is required as a cofactor.

The catalysed reaction is S,S-dimethyl-beta-propiothetin = acrylate + dimethyl sulfide + H(+). Functionally, may cleave dimethylsulfoniopropionate (DMSP), releasing dimethyl sulfide (DMS). DMS is the principal form by which sulfur is transported from oceans to the atmosphere. The real activity of the protein is however subject to debate and it is unclear whether it constitutes a real dimethylsulfoniopropionate lyase in vivo. This is Putative dimethylsulfoniopropionate lyase DddL (dddL) from Cereibacter sphaeroides (strain ATCC 17023 / DSM 158 / JCM 6121 / CCUG 31486 / LMG 2827 / NBRC 12203 / NCIMB 8253 / ATH 2.4.1.) (Rhodobacter sphaeroides).